Consider the following 253-residue polypeptide: U1 small nuclear ribonucleoprotein A (253 aa).

An RRM 1 domain is found at 23 to 102 (VTIYINNLNE…KPMRIQYAKT (80 aa)). Positions 111-140 (DGTFVPRERRKRNDEKPEKKQKREQHHDVS) are disordered. The RRM 2 domain occupies 179–253 (NILFVQNLPH…NQMLISYAKK (75 aa)).

Belongs to the RRM U1 A/B'' family. As to quaternary structure, component of the spliceosome where it is associated with snRNP U1.

It is found in the nucleus. It localises to the nucleolus. Its function is as follows. Involved in nuclear pre-mRNA splicing. The sequence is that of U1 small nuclear ribonucleoprotein A from Oryza sativa subsp. indica (Rice).